Here is a 152-residue protein sequence, read N- to C-terminus: Protein FYV5 (152 aa).

Helical transmembrane passes span 26 to 46, 56 to 76, 82 to 102, 106 to 126, and 127 to 147; these read IISICFSMLSFVFDFSVRICS, LISSSAFKVVSAFSLAGSCVL, VGIIVSLLLFNFSTCNFVLFL, LIDLFFCTFLPTPTFLPTPFF, and FMLHLPIFSLLNALELLYLII.

The protein resides in the cell membrane. It is found in the secreted. It localises to the cell wall. In terms of biological role, involved in maintaining an adequate ionic strength homeostasis of the cellular aqueous environment, necessary for normal growth rate. Required for survival upon exposure to K1 killer toxin and hence plays a role in cell wall glucan synthesis. Required for dithiothreitol (DTT) resistance. Involved in cell cycle progression. This Saccharomyces cerevisiae (strain ATCC 204508 / S288c) (Baker's yeast) protein is Protein FYV5 (FYV5).